A 185-amino-acid polypeptide reads, in one-letter code: Ribosome-recycling factor (185 aa).

The protein belongs to the RRF family.

Its subcellular location is the cytoplasm. In terms of biological role, responsible for the release of ribosomes from messenger RNA at the termination of protein biosynthesis. May increase the efficiency of translation by recycling ribosomes from one round of translation to another. The protein is Ribosome-recycling factor of Clostridium beijerinckii (strain ATCC 51743 / NCIMB 8052) (Clostridium acetobutylicum).